We begin with the raw amino-acid sequence, 132 residues long: Snaclec bothroinsularin subunit alpha (132 aa).

Cystine bridges form between cysteine 2-cysteine 13, cysteine 30-cysteine 127, and cysteine 102-cysteine 119. In terms of domain architecture, C-type lectin spans tyrosine 9–lysine 128.

It belongs to the snaclec family. In terms of assembly, heterodimer of subunits alpha and beta; disulfide-linked. Expressed by the venom gland.

Its subcellular location is the secreted. In terms of biological role, thrombin and prothrombin (F2) inhibitor. The IC(50) of thrombin-induced platelet aggregation and fibrinocoagulation is 62 and 35 nM, respectively. Its inhibitory activity is at least 10-fold lower than that observed for other thrombin inhibitors. This chain is Snaclec bothroinsularin subunit alpha, found in Bothrops insularis (Golden lancehead).